Reading from the N-terminus, the 506-residue chain is Nostrin (506 aa).

The F-BAR domain occupies 1–260 (MRDPLTDCSY…AISKVDVEKD (260 aa)). Ser114 is subject to Phosphoserine. 2 coiled-coil regions span residues 160-230 (SLTQ…LNQY) and 305-334 (KLGR…ASSS). The REM-1 domain occupies 292–372 (PMDKERRKSL…SYKLSSVLAD (81 aa)). The tract at residues 413–435 (KAESKAPAGGQNNPSSSPSGSTV) is disordered. A compositionally biased stretch (low complexity) spans 419-435 (PAGGQNNPSSSPSGSTV). In terms of domain architecture, SH3 spans 438–497 (ASKHLCKALYTFQARQDDELNLEKGDIVTVHEKKEEGWWFGSLKGKRGHFPAAYVEELPP). Ser479 is modified (phosphoserine).

In terms of assembly, homotrimer. Interacts with NOS3, DNM2, WASL and CAV1. Interacts with DAB2. Interacts (via SH3 domain) with DNM2; this interaction allows the recruitment of NOS3 to dynamin-positive structures.

Its subcellular location is the cell membrane. The protein resides in the cytoplasmic vesicle. It localises to the cytoplasm. The protein localises to the cytoskeleton. It is found in the nucleus. Functionally, multivalent adapter protein which may decrease NOS3 activity by inducing its translocation away from the plasma membrane. The chain is Nostrin from Mus musculus (Mouse).